Reading from the N-terminus, the 419-residue chain is Peptide chain release factor subunit 1 (419 aa).

The protein belongs to the eukaryotic release factor 1 family. Heterodimer of two subunits, one of which binds GTP.

Its subcellular location is the cytoplasm. Directs the termination of nascent peptide synthesis (translation) in response to the termination codons UAA, UAG and UGA. The chain is Peptide chain release factor subunit 1 from Methanococcus maripaludis (strain C7 / ATCC BAA-1331).